The primary structure comprises 128 residues: Gastrotropin (128 aa).

At Ala-2 the chain carries N-acetylalanine.

Belongs to the calycin superfamily. Fatty-acid binding protein (FABP) family. Predominantly expressed in ileum; also expressed in ovary.

Its subcellular location is the cytoplasm. The protein resides in the membrane. Functionally, binds to bile acids and is involved in enterohepatic bile acid metabolism. Required for efficient apical to basolateral transport of conjugated bile acids in ileal enterocytes. Stimulates gastric acid and pepsinogen secretion. In Rattus norvegicus (Rat), this protein is Gastrotropin (Fabp6).